The chain runs to 444 residues: 23S rRNA (uracil(1939)-C(5))-methyltransferase RlmD (444 aa).

In terms of domain architecture, TRAM spans 11–70; that stretch reads NSIKNHILKNIKVEKLDHRGRGLAYFQNKPLFIDGALAGELLEVQIVESKKRYSKGKIKK. [4Fe-4S] cluster-binding residues include C83, C89, C92, and C171. 6 residues coordinate S-adenosyl-L-methionine: Q277, F306, N311, E327, D354, and D376. The active-site Nucleophile is C402.

The protein belongs to the class I-like SAM-binding methyltransferase superfamily. RNA M5U methyltransferase family. RlmD subfamily.

The catalysed reaction is uridine(1939) in 23S rRNA + S-adenosyl-L-methionine = 5-methyluridine(1939) in 23S rRNA + S-adenosyl-L-homocysteine + H(+). In terms of biological role, catalyzes the formation of 5-methyl-uridine at position 1939 (m5U1939) in 23S rRNA. In Psychromonas ingrahamii (strain DSM 17664 / CCUG 51855 / 37), this protein is 23S rRNA (uracil(1939)-C(5))-methyltransferase RlmD.